A 163-amino-acid chain; its full sequence is UPF0763 protein C8J_0930 (163 aa).

This sequence belongs to the UPF0763 family.

The chain is UPF0763 protein C8J_0930 from Campylobacter jejuni subsp. jejuni serotype O:6 (strain 81116 / NCTC 11828).